A 545-amino-acid chain; its full sequence is Membrane protein insertase YidC (545 aa).

Residues 6–26 form a helical membrane-spanning segment; sequence NILLIGLLFVSFLLWQQWQAD. Residues 44-65 form a disordered region; sequence STVADAHSSDVPDADSAVPEAT. Transmembrane regions (helical) follow at residues 346-366, 424-444, 461-481, and 504-524; these read LLMFFQSIVGNWGIAIILITL, GGCLPILLQMPIFIALYWVLL, LSVQDPYYVMPILMGISMFVM, and VIFTVFFLWFPAGLVLYWLVG.

This sequence belongs to the OXA1/ALB3/YidC family. Type 1 subfamily. As to quaternary structure, interacts with the Sec translocase complex via SecD. Specifically interacts with transmembrane segments of nascent integral membrane proteins during membrane integration.

The protein resides in the cell inner membrane. Functionally, required for the insertion and/or proper folding and/or complex formation of integral membrane proteins into the membrane. Involved in integration of membrane proteins that insert both dependently and independently of the Sec translocase complex, as well as at least some lipoproteins. Aids folding of multispanning membrane proteins. This Shewanella pealeana (strain ATCC 700345 / ANG-SQ1) protein is Membrane protein insertase YidC.